A 122-amino-acid chain; its full sequence is Small ribosomal subunit protein uS13 (122 aa).

The interval 93 to 122 is disordered; it reads RLSLPVRGQRTKTNSRTRKGKRKTVAGKKK. Basic residues predominate over residues 101–122; the sequence is QRTKTNSRTRKGKRKTVAGKKK.

This sequence belongs to the universal ribosomal protein uS13 family. Part of the 30S ribosomal subunit. Forms a loose heterodimer with protein S19. Forms two bridges to the 50S subunit in the 70S ribosome.

Its function is as follows. Located at the top of the head of the 30S subunit, it contacts several helices of the 16S rRNA. In the 70S ribosome it contacts the 23S rRNA (bridge B1a) and protein L5 of the 50S subunit (bridge B1b), connecting the 2 subunits; these bridges are implicated in subunit movement. Contacts the tRNAs in the A and P-sites. In Chlamydia abortus (strain DSM 27085 / S26/3) (Chlamydophila abortus), this protein is Small ribosomal subunit protein uS13.